A 187-amino-acid polypeptide reads, in one-letter code: ATP synthase subunit b 2 (187 aa).

Over residues 1–12 (MAQERAEHESAD) the composition is skewed to basic and acidic residues. The tract at residues 1–31 (MAQERAEHESADQHTTSTGVPHEGQGEPFPP) is disordered. A helical membrane pass occupies residues 40 to 60 (LLIWLAISFLLLYALMSKLVL).

The protein belongs to the ATPase B chain family. In terms of assembly, F-type ATPases have 2 components, F(1) - the catalytic core - and F(0) - the membrane proton channel. F(1) has five subunits: alpha(3), beta(3), gamma(1), delta(1), epsilon(1). F(0) has three main subunits: a(1), b(2) and c(10-14). The alpha and beta chains form an alternating ring which encloses part of the gamma chain. F(1) is attached to F(0) by a central stalk formed by the gamma and epsilon chains, while a peripheral stalk is formed by the delta and b chains.

It is found in the cell inner membrane. F(1)F(0) ATP synthase produces ATP from ADP in the presence of a proton or sodium gradient. F-type ATPases consist of two structural domains, F(1) containing the extramembraneous catalytic core and F(0) containing the membrane proton channel, linked together by a central stalk and a peripheral stalk. During catalysis, ATP synthesis in the catalytic domain of F(1) is coupled via a rotary mechanism of the central stalk subunits to proton translocation. In terms of biological role, component of the F(0) channel, it forms part of the peripheral stalk, linking F(1) to F(0). The b'-subunit is a diverged and duplicated form of b found in plants and photosynthetic bacteria. This is ATP synthase subunit b 2 (atpF2) from Beijerinckia indica subsp. indica (strain ATCC 9039 / DSM 1715 / NCIMB 8712).